The primary structure comprises 295 residues: Large ribosomal subunit protein uL15m (295 aa).

The N-terminal 20 residues, 1-20, are a transit peptide targeting the mitochondrion; sequence MAGTARGCGTSLDLLRSLPR. The tract at residues 21 to 67 is disordered; the sequence is VSLANLKPSPNSRKRERRPRDRRRGRKCGRGHKGERQRGTRPRLGFE. The span at 32–51 shows a compositional bias: basic residues; sequence SRKRERRPRDRRRGRKCGRG.

The protein belongs to the universal ribosomal protein uL15 family. Component of the mitochondrial ribosome large subunit (39S) which comprises a 16S rRNA and about 50 distinct proteins.

The protein localises to the mitochondrion. This is Large ribosomal subunit protein uL15m (Mrpl15) from Mus musculus (Mouse).